The primary structure comprises 339 residues: GTP 3',8-cyclase (339 aa).

A Radical SAM core domain is found at 20-241; it reads NFDRKFEYLR…WTQKQSLSHD (222 aa). R29 lines the GTP pocket. C36 and C40 together coordinate [4Fe-4S] cluster. Residue Y42 participates in S-adenosyl-L-methionine binding. C43 contributes to the [4Fe-4S] cluster binding site. Residue R78 participates in GTP binding. G82 provides a ligand contact to S-adenosyl-L-methionine. Residue T109 coordinates GTP. Residue S133 participates in S-adenosyl-L-methionine binding. Position 170 (K170) interacts with GTP. M204 is an S-adenosyl-L-methionine binding site. C267 and C270 together coordinate [4Fe-4S] cluster. 272–274 contacts GTP; that stretch reads RLR. C284 contributes to the [4Fe-4S] cluster binding site.

This sequence belongs to the radical SAM superfamily. MoaA family. As to quaternary structure, monomer and homodimer. Requires [4Fe-4S] cluster as cofactor.

The catalysed reaction is GTP + AH2 + S-adenosyl-L-methionine = (8S)-3',8-cyclo-7,8-dihydroguanosine 5'-triphosphate + 5'-deoxyadenosine + L-methionine + A + H(+). It functions in the pathway cofactor biosynthesis; molybdopterin biosynthesis. Catalyzes the cyclization of GTP to (8S)-3',8-cyclo-7,8-dihydroguanosine 5'-triphosphate. The polypeptide is GTP 3',8-cyclase (Psychromonas ingrahamii (strain DSM 17664 / CCUG 51855 / 37)).